A 21-amino-acid polypeptide reads, in one-letter code: Dart gland peptide (21 aa).

The tract at residues 1 to 21 (SINNTGGSGNRRLDKNGFAGQ) is disordered. The N-linked (GlcNAc...) asparagine glycan is linked to Asn-3.

The protein resides in the secreted. This Cornu aspersum (Brown garden snail) protein is Dart gland peptide.